The chain runs to 279 residues: Energy-coupling factor transporter ATP-binding protein EcfA1 (279 aa).

In terms of domain architecture, ABC transporter spans valine 6–glycine 240. ATP is bound at residue glycine 40–serine 47.

The protein belongs to the ABC transporter superfamily. Energy-coupling factor EcfA family. Forms a stable energy-coupling factor (ECF) transporter complex composed of 2 membrane-embedded substrate-binding proteins (S component), 2 ATP-binding proteins (A component) and 2 transmembrane proteins (T component).

It is found in the cell membrane. Its function is as follows. ATP-binding (A) component of a common energy-coupling factor (ECF) ABC-transporter complex. Unlike classic ABC transporters this ECF transporter provides the energy necessary to transport a number of different substrates. The sequence is that of Energy-coupling factor transporter ATP-binding protein EcfA1 from Listeria monocytogenes serovar 1/2a (strain ATCC BAA-679 / EGD-e).